We begin with the raw amino-acid sequence, 229 residues long: Potassium/proton antiporter CemA (229 aa).

The next 3 helical transmembrane spans lie at 7 to 27 (FLPL…SLSF), 106 to 126 (MILH…YSIL), and 189 to 209 (IISG…KYWI).

The protein belongs to the CemA family.

Its subcellular location is the plastid. The protein localises to the chloroplast inner membrane. It catalyses the reaction K(+)(in) + H(+)(out) = K(+)(out) + H(+)(in). Its function is as follows. Contributes to K(+)/H(+) antiport activity by supporting proton efflux to control proton extrusion and homeostasis in chloroplasts in a light-dependent manner to modulate photosynthesis. Prevents excessive induction of non-photochemical quenching (NPQ) under continuous-light conditions. Indirectly promotes efficient inorganic carbon uptake into chloroplasts. The chain is Potassium/proton antiporter CemA from Eucalyptus globulus subsp. globulus (Tasmanian blue gum).